The sequence spans 1513 residues: DNA polymerase alpha catalytic subunit (1513 aa).

The tract at residues 235–254 is disordered; it reads STNQNANASDSKRVSNQTND. 8 residues coordinate Zn(2+): cysteine 1344, cysteine 1347, cysteine 1370, cysteine 1373, cysteine 1404, cysteine 1409, cysteine 1422, and cysteine 1427. The CysA-type zinc-finger motif lies at 1344-1373; that stretch reads CPHCSESYHFPGIFQDGKNNTLSGLLCIKC. The short motif at 1404–1427 is the CysB motif element; the sequence is CQEPACGAVSRQLLYNNKCINLAC.

It belongs to the DNA polymerase type-B family.

The protein localises to the nucleus. The catalysed reaction is DNA(n) + a 2'-deoxyribonucleoside 5'-triphosphate = DNA(n+1) + diphosphate. Its function is as follows. Polymerase alpha in a complex with DNA primase is a replicative polymerase. The sequence is that of DNA polymerase alpha catalytic subunit from Oxytricha trifallax (Sterkiella histriomuscorum).